The following is a 441-amino-acid chain: Xaa-Pro dipeptidase (441 aa).

The Mn(2+) site is built by Asp244, Asp255, His336, Glu381, and Glu420.

This sequence belongs to the peptidase M24B family. Bacterial-type prolidase subfamily. Requires Mn(2+) as cofactor.

It carries out the reaction Xaa-L-Pro dipeptide + H2O = an L-alpha-amino acid + L-proline. Its function is as follows. Splits dipeptides with a prolyl residue in the C-terminal position. The protein is Xaa-Pro dipeptidase of Xanthomonas oryzae pv. oryzae (strain MAFF 311018).